A 316-amino-acid polypeptide reads, in one-letter code: Ribonuclease Z (316 aa).

Zn(2+) contacts are provided by His-63, His-65, Asp-67, His-68, His-143, Asp-213, and His-271. The active-site Proton acceptor is the Asp-67.

This sequence belongs to the RNase Z family. Homodimer. The cofactor is Zn(2+).

It carries out the reaction Endonucleolytic cleavage of RNA, removing extra 3' nucleotides from tRNA precursor, generating 3' termini of tRNAs. A 3'-hydroxy group is left at the tRNA terminus and a 5'-phosphoryl group is left at the trailer molecule.. Functionally, zinc phosphodiesterase, which displays some tRNA 3'-processing endonuclease activity. Probably involved in tRNA maturation, by removing a 3'-trailer from precursor tRNA. This chain is Ribonuclease Z, found in Bacteroides thetaiotaomicron (strain ATCC 29148 / DSM 2079 / JCM 5827 / CCUG 10774 / NCTC 10582 / VPI-5482 / E50).